The primary structure comprises 513 residues: ATP synthase subunit alpha (513 aa).

169-176 (GDRQIGKT) contacts ATP.

This sequence belongs to the ATPase alpha/beta chains family. In terms of assembly, F-type ATPases have 2 components, CF(1) - the catalytic core - and CF(0) - the membrane proton channel. CF(1) has five subunits: alpha(3), beta(3), gamma(1), delta(1), epsilon(1). CF(0) has three main subunits: a(1), b(2) and c(9-12). The alpha and beta chains form an alternating ring which encloses part of the gamma chain. CF(1) is attached to CF(0) by a central stalk formed by the gamma and epsilon chains, while a peripheral stalk is formed by the delta and b chains.

Its subcellular location is the cell inner membrane. It catalyses the reaction ATP + H2O + 4 H(+)(in) = ADP + phosphate + 5 H(+)(out). Functionally, produces ATP from ADP in the presence of a proton gradient across the membrane. The alpha chain is a regulatory subunit. This Francisella tularensis subsp. tularensis (strain SCHU S4 / Schu 4) protein is ATP synthase subunit alpha.